The primary structure comprises 399 residues: S-adenosylmethionine synthase (399 aa).

An ATP-binding site is contributed by His15. Asp17 is a binding site for Mg(2+). Glu43 provides a ligand contact to K(+). Residues Glu56 and Gln99 each coordinate L-methionine. The flexible loop stretch occupies residues 99-109; it reads QSADIAQGVDN. Residues 174–176, 244–245, Asp253, 259–260, Ala276, and Lys280 each bind ATP; these read DGK, RF, and RK. Residue Asp253 coordinates L-methionine. Lys284 serves as a coordination point for L-methionine.

The protein belongs to the AdoMet synthase family. As to quaternary structure, homotetramer; dimer of dimers. It depends on Mg(2+) as a cofactor. K(+) serves as cofactor.

Its subcellular location is the cytoplasm. It catalyses the reaction L-methionine + ATP + H2O = S-adenosyl-L-methionine + phosphate + diphosphate. The protein operates within amino-acid biosynthesis; S-adenosyl-L-methionine biosynthesis; S-adenosyl-L-methionine from L-methionine: step 1/1. Its function is as follows. Catalyzes the formation of S-adenosylmethionine (AdoMet) from methionine and ATP. The overall synthetic reaction is composed of two sequential steps, AdoMet formation and the subsequent tripolyphosphate hydrolysis which occurs prior to release of AdoMet from the enzyme. The polypeptide is S-adenosylmethionine synthase (Salinispora arenicola (strain CNS-205)).